A 163-amino-acid polypeptide reads, in one-letter code: Transcription antitermination protein NusB (163 aa).

It belongs to the NusB family.

In terms of biological role, involved in transcription antitermination. Required for transcription of ribosomal RNA (rRNA) genes. Binds specifically to the boxA antiterminator sequence of the ribosomal RNA (rrn) operons. This is Transcription antitermination protein NusB from Chlorobium luteolum (strain DSM 273 / BCRC 81028 / 2530) (Pelodictyon luteolum).